A 77-amino-acid polypeptide reads, in one-letter code: MSAKEIIGIVITKSLDKTAIVKTQSKSSHERYVKIIKKVKKYTVHDRENISRVGDKVIILQTRPLSKTKRWVIKSIL.

It belongs to the universal ribosomal protein uS17 family. Part of the 30S ribosomal subunit.

Its subcellular location is the plastid. The protein localises to the chloroplast. Its function is as follows. One of the primary rRNA binding proteins, it binds specifically to the 5'-end of 16S ribosomal RNA. The chain is Small ribosomal subunit protein uS17c (rps17) from Cyanidium caldarium (Red alga).